Consider the following 363-residue polypeptide: MKESVIRKLEGLLERNEEVLALLGDASVIADQDRFRALSKEYSQLEEVVAGFKAYQQAQADLDSAKEMLEEDDAEMREMAQEEMKAAKAELERLESELQILLLPKDPNDDTNAFIEIRAGAGGDEAAIFAGDLFRMYSRYAEANRWQMEVMSCNEGEHGGFKEIIVKVSGEGAYGKLKFESGGHRVQRVPETESQGRVHTSAVTVVVMHEVPEAEAISINPADLKVDTFRSSGAGGQHVNKTDSAIRITHIPTGIVVECQDQRSQHKNRAQAMSVLAARIQAVEDEKRRSAEESTRRSLVASGDRSERVRTYNFPQGRVSEHRINLTLYRLNEVMEGDLDAILTPLMQEHQADLLAALADEQG.

Gln237 bears the N5-methylglutamine mark. Basic and acidic residues predominate over residues 284–296; that stretch reads EDEKRRSAEESTR. Residues 284–306 are disordered; that stretch reads EDEKRRSAEESTRRSLVASGDRS.

Belongs to the prokaryotic/mitochondrial release factor family. Methylated by PrmC. Methylation increases the termination efficiency of RF1.

Its subcellular location is the cytoplasm. Its function is as follows. Peptide chain release factor 1 directs the termination of translation in response to the peptide chain termination codons UAG and UAA. The chain is Peptide chain release factor 1 from Shewanella putrefaciens (strain CN-32 / ATCC BAA-453).